A 482-amino-acid polypeptide reads, in one-letter code: Interferon-induced protein with tetratricopeptide repeats 5 (482 aa).

TPR repeat units lie at residues 51 to 84 (LALY…IQQE), 94 to 127 (LVTW…CKKL), 138 to 173 (PETD…EPDN), 181 to 214 (AITV…NPDN), 249 to 282 (PYVL…TPTS), 338 to 371 (AFAY…ENIT), 376 to 410 (HQIH…KDRS), and 435 to 468 (VQSL…DPEN). An interaction with the 5'-triphosphate group of PPP-RNA region spans residues 254 to 260 (YAAKFYR).

The protein belongs to the IFIT family. Monomer. Interacts with MAP3K7 and the components of the IKK core complex CHUK, IKBKB and IKBKG; the interaction synergizes the recruitment of IKK to MAP3K7 and enhances IKK phosphorylation.

The protein resides in the cell projection. The protein localises to the ruffle membrane. Interferon-induced RNA-binding protein involved in the human innate immune response. Has a broad and adaptable RNA structure recognition important for RNA recognition specificity in antiviral defense. Binds precursor and processed tRNAs as well as poly-U-tailed tRNA fragments. Specifically binds single-stranded RNA bearing a 5'-triphosphate group (PPP-RNA), thereby acting as a sensor of viral single-stranded RNAs. Single-stranded PPP-RNAs, which lack 2'-O-methylation of the 5' cap and bear a 5'-triphosphate group instead, are specific from viruses, providing a molecular signature to distinguish between self and non-self mRNAs by the host during viral infection. Directly binds PPP-RNA in a non-sequence-specific manner. Also recognizes and selectively binds AT-rich dsDNA. Additionally, as a mediator in innate immunity, positively regulates IKK-NFKB signaling by sinergizing the recruitment of IKK to MAP3K7. The protein is Interferon-induced protein with tetratricopeptide repeats 5 (IFIT5) of Homo sapiens (Human).